We begin with the raw amino-acid sequence, 110 residues long: Chagasin (110 aa).

The BC loop motif lies at 29–34 (NPTTGF). The DE loop signature appears at 59-68 (PPDSKLLGAG). The FG loop signature appears at 91–100 (RPWTGPSHDS).

Belongs to the protease inhibitor I42 family. As to quaternary structure, interacts with cruzipain.

The protein resides in the flagellar pocket. Its subcellular location is the cytoplasmic vesicle. It localises to the cell surface. Functionally, cysteine protease inhibitor. Inhibits cysteine protease cruzipain. The polypeptide is Chagasin (cha) (Trypanosoma cruzi).